The sequence spans 711 residues: MND1-interacting protein 1 (711 aa).

Residues 390-648 (EWAQKNAMQA…LEGSYDNEAN (259 aa)) are a coiled coil. Disordered regions lie at residues 552-571 (EALA…EGHN) and 602-622 (RLKA…WKPK). Residues 602 to 611 (RLKASSDSDS) show a composition bias toward basic and acidic residues. The RING-type zinc-finger motif lies at 653-697 (CIICMKDEVSVVFLPCAHQVVCGSCSDSFFASNNGGSKVTCPCCR).

Interacts (via C-terminal domain) with MND1 and HOP2. Interacts with XRI1 (via C-terminal domain).

This Arabidopsis thaliana (Mouse-ear cress) protein is MND1-interacting protein 1 (MIP1).